The sequence spans 89 residues: UPF0367 protein CYB_2632 (89 aa).

Positions 69–89 (SKSGSASPMGTRPGFLAQLQS) are disordered.

It belongs to the UPF0367 family.

This chain is UPF0367 protein CYB_2632, found in Synechococcus sp. (strain JA-2-3B'a(2-13)) (Cyanobacteria bacterium Yellowstone B-Prime).